The following is a 278-amino-acid chain: Dermonecrotic toxin LspiSicTox-betaIE2i (278 aa).

Residue H5 is part of the active site. Mg(2+)-binding residues include E25 and D27. Residue H41 is the Nucleophile of the active site. Disulfide bonds link C45–C51 and C47–C190. Position 85 (E85) interacts with Mg(2+).

This sequence belongs to the arthropod phospholipase D family. Class II subfamily. Mg(2+) serves as cofactor. Expressed by the venom gland.

It is found in the secreted. The catalysed reaction is an N-(acyl)-sphingosylphosphocholine = an N-(acyl)-sphingosyl-1,3-cyclic phosphate + choline. It catalyses the reaction an N-(acyl)-sphingosylphosphoethanolamine = an N-(acyl)-sphingosyl-1,3-cyclic phosphate + ethanolamine. The enzyme catalyses a 1-acyl-sn-glycero-3-phosphocholine = a 1-acyl-sn-glycero-2,3-cyclic phosphate + choline. It carries out the reaction a 1-acyl-sn-glycero-3-phosphoethanolamine = a 1-acyl-sn-glycero-2,3-cyclic phosphate + ethanolamine. Its function is as follows. Dermonecrotic toxins cleave the phosphodiester linkage between the phosphate and headgroup of certain phospholipids (sphingolipid and lysolipid substrates), forming an alcohol (often choline) and a cyclic phosphate. This toxin acts on sphingomyelin (SM). It may also act on ceramide phosphoethanolamine (CPE), lysophosphatidylcholine (LPC) and lysophosphatidylethanolamine (LPE), but not on lysophosphatidylserine (LPS), and lysophosphatidylglycerol (LPG). It acts by transphosphatidylation, releasing exclusively cyclic phosphate products as second products. Induces dermonecrosis, hemolysis, increased vascular permeability, edema, inflammatory response, and platelet aggregation. The protein is Dermonecrotic toxin LspiSicTox-betaIE2i of Loxosceles spinulosa (Recluse spider).